The sequence spans 940 residues: MMEGLLWILLSVIIASVHGSRLKTPALPIQPEREPMISKGLSGCSFGGRFYSLEDTWHPDLGEPFGVMHCVMCHCEPQRSRRGKVFGKVSCRNMKQDCPDPTCDDPVLLPGHCCKTCPKGDSGRKEVESLFDFFQEKDDDLHKSYNDRSYISSEDTSTRDSTTTDFVALLTGVTDSWLPSSSGVARARFTLSRTSLTFSITFQRINRPSLIAFLDTDGNTAFEFRVPQADNDMICGIWKNVPKPHMRQLEAEQLHVSMTTADNRKEELQGRIIKHRALFAETFSAILTSDEVHSGMGGIAMLTLSDTENNLHFILIMQGLVPPGSSKVPVRVKLQYRQHLLREIRANITADDSDFAEVLADLNSRELFWLSRGQLQISVQTEGQTLRHISGFISGRRSCDTLQSVLSSGAALTAGQTGGVGSAVFTLHPNGSLDYQLLVAGLSSAVLSVSIEMKPRRRNKRSVLYELSAVFTDQRAAGSCGRVEARHTHMLLQNELFINIATALQPDGELRGQIRLLPYNGLDARRNELPVPLAGVLVSPPVRTGAAGHAWVSVDPQCHLHYEIIVNGLSKSEDASISAHLHGLAEIGEMDDSSTNHKRLLTGFYGQQAQGVLKDISVELLRHLNEGTAYLQVSTKMNPRGEIRGRIHVPNHCESPAPRAEFLEEPEFEDLLFTREPTELRKDTHTHVHSCFFEGEQHTHGSQWTPQYNTCFTCTCQKKTVICDPVMCPTLSCTHTVQPEDQCCPICEEKKESKETAAVEKVEENPEGCYFEGDQKMHAPGTTWHPFVPPFGYIKCAVCTCKGSTGEVHCEKVTCPPLTCSRPIRRNPSDCCKECPPEETPPLEDEEMMQADGTRLCKFGKNYYQNSEHWHPSVPLVGEMKCITCWCDHGVTKCQRKQCPLLSCRNPIRTEGKCCPECIEDFMEKEEMAKMAEKKKSWRH.

The signal sequence occupies residues 1–19 (MMEGLLWILLSVIIASVHG). Residues 42–118 (SGCSFGGRFY…LPGHCCKTCP (77 aa)) enclose the VWFC 1 domain. 4 CHRD domains span residues 162 to 277 (TTTD…KHRA), 279 to 398 (FAET…GRRS), 404 to 519 (SVLS…LLPY), and 525 to 652 (RRNE…VPNH). N-linked (GlcNAc...) asparagine glycans are attached at residues asparagine 347 and asparagine 430. VWFC domains lie at 689–748 (HSCF…PICE), 767–836 (EGCY…KECP), and 855–919 (RLCK…PECI).

This sequence belongs to the chordin family. Interacts with twsg1 and/or bmp4. Post-translationally, cleaved by tolloid proteases; cleavage participates in dorsoventral patterning during early development.

The protein resides in the secreted. Its function is as follows. Dorsalizing factor. Key developmental protein that dorsalizes early vertebrate embryonic tissues by binding to ventralizing TGF-beta family bone morphogenetic proteins (BMPs) and sequestering them in latent complexes. This is Chordin (chd) from Danio rerio (Zebrafish).